Here is a 412-residue protein sequence, read N- to C-terminus: uncharacterized protein (412 aa).

H49 lines the Zn(2+) pocket. The active-site Proton acceptor is E52. H53 and E129 together coordinate Zn(2+).

This sequence belongs to the peptidase M16 family. Zn(2+) is required as a cofactor.

This is an uncharacterized protein from Rickettsia felis (strain ATCC VR-1525 / URRWXCal2) (Rickettsia azadi).